We begin with the raw amino-acid sequence, 186 residues long: Pyridoxal 5'-phosphate synthase subunit PdxT (186 aa).

47–49 (GES) lines the L-glutamine pocket. Residue Cys79 is the Nucleophile of the active site. L-glutamine is bound by residues Arg106 and 134-135 (IR). Active-site charge relay system residues include His170 and Glu172.

It belongs to the glutaminase PdxT/SNO family. In the presence of PdxS, forms a dodecamer of heterodimers. Only shows activity in the heterodimer.

The enzyme catalyses aldehydo-D-ribose 5-phosphate + D-glyceraldehyde 3-phosphate + L-glutamine = pyridoxal 5'-phosphate + L-glutamate + phosphate + 3 H2O + H(+). The catalysed reaction is L-glutamine + H2O = L-glutamate + NH4(+). Its pathway is cofactor biosynthesis; pyridoxal 5'-phosphate biosynthesis. Functionally, catalyzes the hydrolysis of glutamine to glutamate and ammonia as part of the biosynthesis of pyridoxal 5'-phosphate. The resulting ammonia molecule is channeled to the active site of PdxS. The protein is Pyridoxal 5'-phosphate synthase subunit PdxT of Methanothrix thermoacetophila (strain DSM 6194 / JCM 14653 / NBRC 101360 / PT) (Methanosaeta thermophila).